The chain runs to 845 residues: Protein P (845 aa).

Residues 1–179 form a terminal protein domain (TP) region; sequence MPLSYQHFRK…FCGSPYSWEQ (179 aa). The segment at 180–348 is spacer; sequence ELQHGRLVIK…YCLSHLVNLR (169 aa). Positions 226-246 are disordered; that stretch reads GLQPHQGPLASSQPGRSGSIR. The tract at residues 349–692 is polymerase/reverse transcriptase domain (RT); that stretch reads EDRGPCDEHG…YMNLYPVARQ (344 aa). Residues 359–602 form the Reverse transcriptase domain; sequence EHHIRIPRTP…YSLNFMGYVI (244 aa). Mg(2+)-binding residues include Asp-431, Asp-553, and Asp-554.

This sequence belongs to the hepadnaviridae P protein family.

It catalyses the reaction DNA(n) + a 2'-deoxyribonucleoside 5'-triphosphate = DNA(n+1) + diphosphate. The enzyme catalyses Endonucleolytic cleavage to 5'-phosphomonoester.. With respect to regulation, activated by host HSP70 and HSP40 in vitro to be able to bind the epsilon loop of the pgRNA. Because deletion of the RNase H region renders the protein partly chaperone-independent, the chaperones may be needed indirectly to relieve occlusion of the RNA-binding site by this domain. Inhibited by several reverse-transcriptase inhibitors: Lamivudine, Adefovir and Entecavir. Functionally, multifunctional enzyme that converts the viral RNA genome into dsDNA in viral cytoplasmic capsids. This enzyme displays a DNA polymerase activity that can copy either DNA or RNA templates, and a ribonuclease H (RNase H) activity that cleaves the RNA strand of RNA-DNA heteroduplexes in a partially processive 3'- to 5'-endonucleasic mode. Neo-synthesized pregenomic RNA (pgRNA) are encapsidated together with the P protein, and reverse-transcribed inside the nucleocapsid. Initiation of reverse-transcription occurs first by binding the epsilon loop on the pgRNA genome, and is initiated by protein priming, thereby the 5'-end of (-)DNA is covalently linked to P protein. Partial (+)DNA is synthesized from the (-)DNA template and generates the relaxed circular DNA (RC-DNA) genome. After budding and infection, the RC-DNA migrates in the nucleus, and is converted into a plasmid-like covalently closed circular DNA (cccDNA). The activity of P protein does not seem to be necessary for cccDNA generation, and is presumably released from (+)DNA by host nuclear DNA repair machinery. This is Protein P from Hepatitis B virus genotype A2 subtype adw2 (isolate Germany/991/1990) (HBV-A).